The following is a 197-amino-acid chain: uncharacterized protein (197 aa).

In terms of domain architecture, SIS spans 33–184 (MISKIMDASS…IAEFMSILGK (152 aa)).

It belongs to the SIS family. PHI subfamily.

This is an uncharacterized protein from Methanothermobacter thermautotrophicus (strain ATCC 29096 / DSM 1053 / JCM 10044 / NBRC 100330 / Delta H) (Methanobacterium thermoautotrophicum).